Reading from the N-terminus, the 71-residue chain is Small ribosomal subunit protein eS31 (71 aa).

Zn(2+)-binding residues include C35, C38, C53, and C56. The C4-type zinc-finger motif lies at C35–C56.

It belongs to the eukaryotic ribosomal protein eS31 family. Part of the 30S ribosomal subunit. Zn(2+) serves as cofactor.

The sequence is that of Small ribosomal subunit protein eS31 from Methanococcus vannielii (strain ATCC 35089 / DSM 1224 / JCM 13029 / OCM 148 / SB).